Consider the following 202-residue polypeptide: MAASNPRQAEISRKTNETDISVTVDLDGEGRSDISTGVGFFDHMLDQLSRHSLIDMKVSALGDLHIDDHHTVEDCGIAIGQAIAKALGDRRGITRYASLDLAMDEALTRAAVDVSGRPFLVWQVTFPSPKIGSFDTELVREFFQALAQNAGITLHVTNLYGANAHHIAETCFKAVARVLRAALSPDPRQLNAIPSTKGTLNG.

This sequence belongs to the imidazoleglycerol-phosphate dehydratase family.

It localises to the cytoplasm. It catalyses the reaction D-erythro-1-(imidazol-4-yl)glycerol 3-phosphate = 3-(imidazol-4-yl)-2-oxopropyl phosphate + H2O. The protein operates within amino-acid biosynthesis; L-histidine biosynthesis; L-histidine from 5-phospho-alpha-D-ribose 1-diphosphate: step 6/9. This is Imidazoleglycerol-phosphate dehydratase from Chelativorans sp. (strain BNC1).